The primary structure comprises 365 residues: MRVLSLFLKDFRNYTDLRLELGPEMNSIFGLNAQGKTNLLEALYILSLGRSFRTSRLTDAIRFGASHFFIEAVFSHKEVFHTLSIQVDKKGKKILFDGAPITKLSELVGLFPVILFSIKDIAIIEGSPSERRRFLDLLLAQASDKYTEHISLYHKALDQRNASIKAQNQKAISAWNSPLIAYGSLVAFLRNECTKKLNTIFQTLWDNTLKETLSLRYESSLITEESPTLNDIASNYYEQLRIANTKDLDLGYTMVGPHRDELLLTINDLPVAKFSSEGQKHSLLAVLRFAECVYLQEEFCIHPILCMDDIHACLDQQRLDQLLQLSNSLGQVVTTSTICPDHRSTTSCIFHVTQAQVSLVAPQSL.

30 to 37 provides a ligand contact to ATP; sequence GLNAQGKT.

The protein belongs to the RecF family.

It is found in the cytoplasm. Functionally, the RecF protein is involved in DNA metabolism; it is required for DNA replication and normal SOS inducibility. RecF binds preferentially to single-stranded, linear DNA. It also seems to bind ATP. The protein is DNA replication and repair protein RecF of Chlamydia trachomatis serovar A (strain ATCC VR-571B / DSM 19440 / HAR-13).